Reading from the N-terminus, the 130-residue chain is Protein ApaG (130 aa).

The region spanning 3 to 127 (RAVTRQIEVL…FSLDSPDIRR (125 aa)) is the ApaG domain.

This chain is Protein ApaG, found in Afipia carboxidovorans (strain ATCC 49405 / DSM 1227 / KCTC 32145 / OM5) (Oligotropha carboxidovorans).